Consider the following 473-residue polypeptide: MNAAVIDSKNSQDFIVADMSLADWGRKELNIAETEMPGLVQTREEYKVQQPLKGARIAGSLHMTIQTGVLIETLTALGADVRWASCNIFSTQDHAAAAIAKAGTPVFAFKGESLDEYWEFSHRIFEWPNGEFANMILDDGGDATLLLILGSKAEKDRSVISKPTNEEEVALYKSIERHLDADPTWYSTRLAHIKGVTEETTTGVHRLYQMEKEGRLPFPAINVNDSVTKSKFDNLYGCRESLVDGIKRATDVMIAGKIAVVAGYGDVGKGCAQSLRGLGATVWVTEIDPICALQAAMEGYRVVTMEYAADKADIFVTATGNYHVIGHDHMKAMRHNAIVCNIGHFDSEIDVASTRQYQWDNIKPQVDHIIFPDGKRVILLAEGRLVNLGCATGHPSFVMSNSFTNQTLAQIELFTQGNKYENKVYVLPKHLDEKVARLHLARIGANLTVLSDEQAGYIGVDKNGPFKPNHYRY.

3 residues coordinate substrate: Thr-64, Asp-139, and Glu-199. 200 to 202 (TTT) serves as a coordination point for NAD(+). The substrate site is built by Lys-229 and Asp-233. NAD(+) contacts are provided by residues Asn-234, 263-268 (GYGDVG), Glu-286, Asn-321, 342-344 (IGH), and Asn-387.

Belongs to the adenosylhomocysteinase family. The cofactor is NAD(+).

It localises to the cytoplasm. The enzyme catalyses S-adenosyl-L-homocysteine + H2O = L-homocysteine + adenosine. Its pathway is amino-acid biosynthesis; L-homocysteine biosynthesis; L-homocysteine from S-adenosyl-L-homocysteine: step 1/1. Functionally, may play a key role in the regulation of the intracellular concentration of adenosylhomocysteine. This is Adenosylhomocysteinase from Paraburkholderia xenovorans (strain LB400).